Consider the following 323-residue polypeptide: L-lactate dehydrogenase 1 (323 aa).

Residues Val-17, Asp-38, Arg-43, Tyr-68, and 82–83 contribute to the NAD(+) site; that span reads GA. Positions 85 and 91 each coordinate substrate. NAD(+)-binding positions include Ser-104, 121-123, and Ser-146; that span reads AAN. 123–126 is a substrate binding site; the sequence is NPVD. 151–154 serves as a coordination point for substrate; sequence DTGR. His-178 serves as the catalytic Proton acceptor. Phosphotyrosine is present on Tyr-223. Substrate is bound at residue Thr-232.

Belongs to the LDH/MDH superfamily. LDH family. In terms of assembly, homotetramer.

It is found in the cytoplasm. The enzyme catalyses (S)-lactate + NAD(+) = pyruvate + NADH + H(+). It participates in fermentation; pyruvate fermentation to lactate; (S)-lactate from pyruvate: step 1/1. Its function is as follows. Catalyzes the conversion of lactate to pyruvate. The chain is L-lactate dehydrogenase 1 from Lactobacillus johnsonii (strain CNCM I-12250 / La1 / NCC 533).